A 758-amino-acid chain; its full sequence is 5-methyltetrahydropteroyltriglutamate--homocysteine methyltransferase (758 aa).

Residues 16–19 and Lys116 each bind 5-methyltetrahydropteroyltri-L-glutamate; that span reads RELK. Residues 436–438 and Glu489 contribute to the L-homocysteine site; that span reads IGS. Residues 436–438 and Glu489 each bind L-methionine; that span reads IGS. 5-methyltetrahydropteroyltri-L-glutamate is bound by residues 520 to 521 and Trp566; that span reads RC. Position 604 (Asp604) interacts with L-homocysteine. Asp604 contributes to the L-methionine binding site. Residue Glu610 participates in 5-methyltetrahydropteroyltri-L-glutamate binding. 3 residues coordinate Zn(2+): His646, Cys648, and Glu670. The active-site Proton donor is His699. Zn(2+) is bound at residue Cys731.

The protein belongs to the vitamin-B12 independent methionine synthase family. Zn(2+) serves as cofactor.

It carries out the reaction 5-methyltetrahydropteroyltri-L-glutamate + L-homocysteine = tetrahydropteroyltri-L-glutamate + L-methionine. The protein operates within amino-acid biosynthesis; L-methionine biosynthesis via de novo pathway; L-methionine from L-homocysteine (MetE route): step 1/1. In terms of biological role, catalyzes the transfer of a methyl group from 5-methyltetrahydrofolate to homocysteine resulting in methionine formation. The polypeptide is 5-methyltetrahydropteroyltriglutamate--homocysteine methyltransferase (Xylella fastidiosa (strain M12)).